A 446-amino-acid polypeptide reads, in one-letter code: Serum factor response D (446 aa).

Positions 1 to 61 (MGRKKIKIQR…PNAKEKYFQY (61 aa)) constitute an MADS-box domain. Disordered regions lie at residues 95–195 (KKEK…FNSS), 210–296 (TQEN…CQQV), and 319–432 (CSSP…SNLN). Over residues 112 to 121 (SHSEEEDHKS) the composition is skewed to basic and acidic residues. Positions 133 to 142 (HHNHHHHHHQ) are enriched in basic residues. Low complexity-rich tracts occupy residues 143 to 195 (YNNN…FNSS) and 216 to 282 (HYNN…NNNN). Over residues 322 to 355 (PEDTSPMTSPRTPPFSSTNTNTLQTSPNSQQKSK) the composition is skewed to polar residues. The span at 365–432 (NNNQNNNNQN…SPTSSSSNLN (68 aa)) shows a compositional bias: low complexity.

It is found in the nucleus. This Dictyostelium discoideum (Social amoeba) protein is Serum factor response D (srfD).